Here is a 390-residue protein sequence, read N- to C-terminus: Ammonium/H(+) antiporter subunit AmhT (390 aa).

Helical transmembrane passes span 2–22, 31–51, 52–72, 94–114, 143–163, 178–198, 212–232, 266–286, 288–308, and 351–371; these read VIPE…TGFV, VVIF…SHLL, HFAG…EFPL, FGVT…SLII, FMLG…AVLV, LLVV…VFLF, DLFI…ALYL, LLLP…EGIP, IPLL…VGVL, and VFIL…PSIA.

Belongs to the monovalent cation:proton antiporter 2 (CPA2) transporter (TC 2.A.37) family. As to quaternary structure, interacts with AmhM.

The protein resides in the cell membrane. With respect to regulation, amhT alone exhibits antiport activity, but interaction with AmhM confers different properties, such as higher KM for potassium. Functionally, ammonium/proton antiporter that mediates the efflux of ammonium ions. Can also transport potassium or rubidium, but not sodium or lithium. In Alkalihalophilus pseudofirmus (strain ATCC BAA-2126 / JCM 17055 / OF4) (Bacillus pseudofirmus), this protein is Ammonium/H(+) antiporter subunit AmhT (amhT).